Here is a 199-residue protein sequence, read N- to C-terminus: Urease accessory protein UreG (199 aa).

GTP is bound at residue 8 to 15 (GPVGSGKT).

This sequence belongs to the SIMIBI class G3E GTPase family. UreG subfamily. As to quaternary structure, homodimer. UreH, UreF and UreG form a complex that acts as a GTP-hydrolysis-dependent molecular chaperone, activating the urease apoprotein by helping to assemble the nickel containing metallocenter of UreC. The UreE protein probably delivers the nickel.

The protein resides in the cytoplasm. Facilitates the functional incorporation of the urease nickel metallocenter. This process requires GTP hydrolysis, probably effectuated by UreG. This chain is Urease accessory protein UreG, found in Helicobacter pylori (strain P12).